A 257-amino-acid chain; its full sequence is Thiazole synthase (257 aa).

The Schiff-base intermediate with DXP role is filled by K98. Residues G159, 185–186 (AG), and 207–208 (NT) contribute to the 1-deoxy-D-xylulose 5-phosphate site.

It belongs to the ThiG family. Homotetramer. Forms heterodimers with either ThiH or ThiS.

The protein localises to the cytoplasm. It carries out the reaction [ThiS sulfur-carrier protein]-C-terminal-Gly-aminoethanethioate + 2-iminoacetate + 1-deoxy-D-xylulose 5-phosphate = [ThiS sulfur-carrier protein]-C-terminal Gly-Gly + 2-[(2R,5Z)-2-carboxy-4-methylthiazol-5(2H)-ylidene]ethyl phosphate + 2 H2O + H(+). Its pathway is cofactor biosynthesis; thiamine diphosphate biosynthesis. Its function is as follows. Catalyzes the rearrangement of 1-deoxy-D-xylulose 5-phosphate (DXP) to produce the thiazole phosphate moiety of thiamine. Sulfur is provided by the thiocarboxylate moiety of the carrier protein ThiS. In vitro, sulfur can be provided by H(2)S. This chain is Thiazole synthase, found in Anaeromyxobacter dehalogenans (strain 2CP-C).